A 255-amino-acid chain; its full sequence is MIEKVLEMDDWKAYKIPHTVEIDGMVEETKTLIIEFKNKRKVLSTREGFKEVKYVGNHSIPVPFWDKVHNYKDYENQVLNKIGIKKEDIALLSTGANMDNLAVAKEEFDEFYVVAFTTAGAKHNAIRLGDEEADYIEKDFKTYKIVDGKIVPKEEIGTVNIILITNANLTDGAMARAIITITEAKTNAFQELNIRSTKHPELQATGTGTDNIVVVKGFGSGVDYTGGHTKMGEMIAKAVKRSVIEALIKQDKIKI.

This is an uncharacterized protein from Methanocaldococcus jannaschii (strain ATCC 43067 / DSM 2661 / JAL-1 / JCM 10045 / NBRC 100440) (Methanococcus jannaschii).